Reading from the N-terminus, the 436-residue chain is Putative UDP-arabinose 4-epimerase 4 (436 aa).

The interval 1 to 20 (MLNSSGVRTQRRSPRPLSLG) is disordered. Topologically, residues 1–60 (MLNSSGVRTQRRSPRPLSLGGRKIITPTKFAYDHHNPDKVLDFVEMDCLEPKTKNNLTGK) are cytoplasmic. The chain crosses the membrane as a helical; Signal-anchor for type II membrane protein span at residues 61 to 81 (LLLVASLLILAIIVISQSSSF). Topologically, residues 82–436 (TSPSAFSQRE…KIHPHGYNSY (355 aa)) are lumenal. 96–127 (HVLVTGGAGYIGSHAALRLLRDSYRVTIVDNL) contacts NAD(+). Y244 acts as the Proton acceptor in catalysis.

This sequence belongs to the NAD(P)-dependent epimerase/dehydratase family. NAD(+) is required as a cofactor.

It localises to the golgi apparatus. The protein resides in the golgi stack membrane. It carries out the reaction UDP-beta-L-arabinopyranose = UDP-alpha-D-xylose. It participates in nucleotide-sugar biosynthesis; UDP-L-arabinose biosynthesis; UDP-L-arabinose from UDP-alpha-D-xylose: step 1/1. The protein operates within cell wall biogenesis; cell wall polysaccharide biosynthesis. The protein is Putative UDP-arabinose 4-epimerase 4 of Arabidopsis thaliana (Mouse-ear cress).